The following is a 485-amino-acid chain: Glutamate--tRNA ligase (485 aa).

Residues 11 to 21 (PSPTGLLHIGN) carry the 'HIGH' region motif. A 'KMSKS' region motif is present at residues 255 to 259 (KLSKR). Position 258 (lysine 258) interacts with ATP.

It belongs to the class-I aminoacyl-tRNA synthetase family. Glutamate--tRNA ligase type 1 subfamily. Monomer.

It localises to the cytoplasm. It carries out the reaction tRNA(Glu) + L-glutamate + ATP = L-glutamyl-tRNA(Glu) + AMP + diphosphate. In terms of biological role, catalyzes the attachment of glutamate to tRNA(Glu) in a two-step reaction: glutamate is first activated by ATP to form Glu-AMP and then transferred to the acceptor end of tRNA(Glu). The sequence is that of Glutamate--tRNA ligase from Streptococcus gordonii (strain Challis / ATCC 35105 / BCRC 15272 / CH1 / DL1 / V288).